A 690-amino-acid chain; its full sequence is UvrABC system protein C (690 aa).

Residues 1–60 (MTTDSSDPAKPAGPGQPPGSGADTRPGGLATGQDVDPATIETDEDDEARLPDVPDEPTDA) form a disordered region. Acidic residues predominate over residues 41-58 (ETDEDDEARLPDVPDEPT). Positions 82–160 (TSPGVYRMMN…IKQLRPRFNV (79 aa)) constitute a GIY-YIG domain. Residues 270 to 305 (RAVKEELAREMEKASGDLAFERAALYRDRLAALSAI) enclose the UVR domain.

Belongs to the UvrC family. As to quaternary structure, interacts with UvrB in an incision complex.

It localises to the cytoplasm. Its function is as follows. The UvrABC repair system catalyzes the recognition and processing of DNA lesions. UvrC both incises the 5' and 3' sides of the lesion. The N-terminal half is responsible for the 3' incision and the C-terminal half is responsible for the 5' incision. The polypeptide is UvrABC system protein C (Nitrobacter hamburgensis (strain DSM 10229 / NCIMB 13809 / X14)).